The chain runs to 267 residues: Pro-opiomelanocortin (267 aa).

An N-terminal signal peptide occupies residues methionine 1–glycine 26. Phenylalanine 87 bears the Phenylalanine amide mark. Disordered stretches follow at residues glycine 88–lysine 156 and lysine 215–threonine 242. The N-linked (GlcNAc...) asparagine glycan is linked to asparagine 91. The span at serine 94–glycine 105 shows a compositional bias: gly residues. The propeptide occupies glutamate 109–aspartate 133. The span at arginine 131–arginine 143 shows a compositional bias: basic and acidic residues. Residue serine 136 is modified to N-acetylserine; in Corticotropin. The residue at position 148 (valine 148) is a Valine amide. Over residues lysine 215 to tyrosine 237 the composition is skewed to basic and acidic residues.

This sequence belongs to the POMC family. Specific enzymatic cleavages at paired basic residues yield the different active peptides. As to expression, ACTH and MSH are produced by the pituitary gland.

Its subcellular location is the secreted. Stimulates the adrenal glands to release cortisol. Its function is as follows. Anorexigenic peptide. Increases the pigmentation of skin by increasing melanin production in melanocytes. Functionally, increases the pigmentation of skin by increasing melanin production in melanocytes. In terms of biological role, endogenous orexigenic opiate. Endogenous opiate. The polypeptide is Pro-opiomelanocortin (POMC) (Sus scrofa (Pig)).